Reading from the N-terminus, the 517-residue chain is Crotonobetaine/carnitine--CoA ligase (517 aa).

This sequence belongs to the ATP-dependent AMP-binding enzyme family.

The enzyme catalyses 4-(trimethylamino)butanoate + ATP + CoA = 4-(trimethylamino)butanoyl-CoA + AMP + diphosphate. It carries out the reaction crotonobetaine + ATP + CoA = crotonobetainyl-CoA + AMP + diphosphate. The catalysed reaction is (R)-carnitine + ATP + CoA = (R)-carnitinyl-CoA + AMP + diphosphate. Its pathway is amine and polyamine metabolism; carnitine metabolism. Functionally, catalyzes the transfer of CoA to carnitine, generating the initial carnitinyl-CoA needed for the CaiB reaction cycle. Also has activity toward crotonobetaine and gamma-butyrobetaine. The chain is Crotonobetaine/carnitine--CoA ligase from Escherichia coli O9:H4 (strain HS).